The primary structure comprises 403 residues: MLSIKRTLLLLGAVLPAVFGAPVQETRRAAQKIPGKYIVTFKPGTDTATIESHTLWATDLHKRNLERRDTTSGEPPVGIEKSYKIKDFAAYAGSFDDATIEEIRKSADVAHVEEDQIWYLDALTTQKGAPWGLGSISHKGQASTDYIYDTSAGAGTYAYVVDSGINVNHVEFESRASLAYNAAGGSHVDSIGHGTHVAGTIGGKTYGVAKKTNLLSVKVFQGESSSTSIILDGFNWAVNDIVSKGRTKKAAINMSLGGGYSYAFNNAVENAFDEGVLSVVAAGNENSDASNTSPASAPNALTVAAINKSNARASFSNYGSVVDIFAPGQDILSAWIGSTTATNTISGTSMATPHIVGLSVYLMGLENLSGPAAVTARIKELATNGVVTNVKGSPNKLAYNGNA.

An N-terminal signal peptide occupies residues 1 to 21; it reads MLSIKRTLLLLGAVLPAVFGA. A propeptide spanning residues 22–125 is cleaved from the precursor; the sequence is PVQETRRAAQ…QIWYLDALTT (104 aa). Positions 36 to 120 constitute an Inhibitor I9 domain; that stretch reads KYIVTFKPGT…HVEEDQIWYL (85 aa). Residues 130–403 enclose the Peptidase S8 domain; it reads PWGLGSISHK…PNKLAYNGNA (274 aa). Residues aspartate 162 and histidine 193 each act as charge relay system in the active site. Asparagine 253 and asparagine 307 each carry an N-linked (GlcNAc...) asparagine glycan. Serine 349 acts as the Charge relay system in catalysis. A glycan (N-linked (GlcNAc...) asparagine) is linked at asparagine 367.

This sequence belongs to the peptidase S8 family.

The protein localises to the secreted. The catalysed reaction is Hydrolysis of proteins with broad specificity, and of Bz-Arg-OEt &gt; Ac-Tyr-OEt. Does not hydrolyze peptide amides.. Its function is as follows. Secreted alkaline protease that allows assimilation of proteinaceous substrates. Acts as a significant virulence factor in invasive aspergillosis. Involved in immune evasion from the human and mice complement systems during infection. Efficiently cleaves important components of the complement cascade such as such as C3, C4, C5, and C1q, as well as IgG, which leads to down-regulation of complement activation at the hyphal surface. The chain is Alkaline protease 1 (alp1) from Aspergillus fumigatus (strain CBS 144.89 / FGSC A1163 / CEA10) (Neosartorya fumigata).